A 103-amino-acid polypeptide reads, in one-letter code: Large ribosomal subunit protein bL21 (103 aa).

Belongs to the bacterial ribosomal protein bL21 family. As to quaternary structure, part of the 50S ribosomal subunit. Contacts protein L20.

This protein binds to 23S rRNA in the presence of protein L20. The chain is Large ribosomal subunit protein bL21 from Paracidovorax citrulli (strain AAC00-1) (Acidovorax citrulli).